A 319-amino-acid polypeptide reads, in one-letter code: Thioredoxin reductase (319 aa).

37–44 (ERGVPGGQ) lines the FAD pocket. Cys-136 and Cys-139 are oxidised to a cystine. FAD is bound at residue 279–288 (DVRAKSLRQI).

The protein belongs to the class-II pyridine nucleotide-disulfide oxidoreductase family. Homodimer. The cofactor is FAD.

Its subcellular location is the cytoplasm. The enzyme catalyses [thioredoxin]-dithiol + NADP(+) = [thioredoxin]-disulfide + NADPH + H(+). The sequence is that of Thioredoxin reductase (trxB) from Listeria monocytogenes serovar 1/2a (strain ATCC BAA-679 / EGD-e).